A 56-amino-acid polypeptide reads, in one-letter code: U-megalopygitoxin(2)-Mo9 (56 aa).

A signal peptide spans 1–25; that stretch reads MKFIVLLLIVTSVLMMFAVTTEASP. Position 26 is a pyrrolidone carboxylic acid (Q26). Residue T55 is modified to Threonine amide.

The protein belongs to the caterpillar 2 family. In terms of processing, contains 2 disulfide bonds. In terms of tissue distribution, expressed by the venom apparatus.

Its subcellular location is the secreted. Probable toxin. This is U-megalopygitoxin(2)-Mo9 from Megalopyge opercularis (Southern flannel moth).